The primary structure comprises 94 residues: Large ribosomal subunit protein bL25 (94 aa).

This sequence belongs to the bacterial ribosomal protein bL25 family. Part of the 50S ribosomal subunit; part of the 5S rRNA/L5/L18/L25 subcomplex. Contacts the 5S rRNA. Binds to the 5S rRNA independently of L5 and L18.

Its function is as follows. This is one of the proteins that binds to the 5S RNA in the ribosome where it forms part of the central protuberance. The protein is Large ribosomal subunit protein bL25 of Sodalis glossinidius (strain morsitans).